The following is a 269-amino-acid chain: MNYFSKLSCSWRITLGYLLFMLILPILALLSRASQELFSNFWSIAMEPAAIYAYSITLSMALIASIVNGIFGIFIAWILVRYNFPGKRIVDAAIDLPFALPTSVAGLTLATVYSEKGWIGHFLQSLSIKVVFTKLGVGVAMIFVSFPFVVRTLQPVLQDIEKELEEAAWSLGASSWTTFWKVIFPSLIPSLLTGIALAFSRAVGEYGSVVIIASNIPFKDLTAPVLIFQKLEQYDYTGATVIGTVILSISLFILVGINIIQSLNQMYSK.

7 helical membrane passes run 10-30 (SWRITLGYLLFMLILPILALL), 60-80 (MALIASIVNGIFGIFIAWILV), 92-112 (AAIDLPFALPTSVAGLTLATV), 130-150 (VVFTKLGVGVAMIFVSFPFVV), 179-199 (FWKVIFPSLIPSLLTGIALAF), 208-228 (SVVIIASNIPFKDLTAPVLIF), and 240-260 (TVIGTVILSISLFILVGINII). The region spanning 54–255 (YSITLSMALI…ILSISLFILV (202 aa)) is the ABC transmembrane type-1 domain.

This sequence belongs to the binding-protein-dependent transport system permease family. CysTW subfamily.

It is found in the plastid. It localises to the chloroplast membrane. In terms of biological role, part of the ABC transporter complex cysAWTP (TC 3.A.1.6.1) involved in sulfate/thiosulfate import. Probably responsible for the translocation of the substrate across the membrane. The chain is Probable sulfate transport system permease protein cysT (cysT) from Mesostigma viride (Green alga).